Reading from the N-terminus, the 137-residue chain is Phosphoribosyl-AMP cyclohydrolase (137 aa).

Asp84 is a Mg(2+) binding site. Residue Cys85 coordinates Zn(2+). Asp86 and Asp88 together coordinate Mg(2+). Cys101 and Cys108 together coordinate Zn(2+).

Belongs to the PRA-CH family. Homodimer. Requires Mg(2+) as cofactor. It depends on Zn(2+) as a cofactor.

The protein localises to the cytoplasm. It catalyses the reaction 1-(5-phospho-beta-D-ribosyl)-5'-AMP + H2O = 1-(5-phospho-beta-D-ribosyl)-5-[(5-phospho-beta-D-ribosylamino)methylideneamino]imidazole-4-carboxamide. It functions in the pathway amino-acid biosynthesis; L-histidine biosynthesis; L-histidine from 5-phospho-alpha-D-ribose 1-diphosphate: step 3/9. Its function is as follows. Catalyzes the hydrolysis of the adenine ring of phosphoribosyl-AMP. This Chlorobium limicola (strain DSM 245 / NBRC 103803 / 6330) protein is Phosphoribosyl-AMP cyclohydrolase.